Consider the following 114-residue polypeptide: Large ribosomal subunit protein bL20c (114 aa).

The protein belongs to the bacterial ribosomal protein bL20 family.

Its subcellular location is the plastid. It localises to the chloroplast. Functionally, binds directly to 23S ribosomal RNA and is necessary for the in vitro assembly process of the 50S ribosomal subunit. It is not involved in the protein synthesizing functions of that subunit. In Trieres chinensis (Marine centric diatom), this protein is Large ribosomal subunit protein bL20c (rpl20).